An 887-amino-acid polypeptide reads, in one-letter code: Probable dual specificity protein kinase madd-3 (887 aa).

Disordered stretches follow at residues 77–147, 163–299, 313–333, 347–475, and 504–533; these read PIKS…ISAA, AQPP…PKAL, LPQS…STGG, TTIC…KSAA, and RKPS…QHQD. Low complexity predominate over residues 108 to 118; sequence PTQNPVQLPLP. Over residues 121–130 the composition is skewed to basic and acidic residues; sequence VSEKPGDKKS. Residues 177 to 192 are compositionally biased toward polar residues; the sequence is SETNSGSGPVSKQVSG. Positions 217–241 are enriched in low complexity; sequence SSASTRAKAASAVAPEANPAPVPTA. Polar residues-rich tracts occupy residues 314–332 and 356–366; these read PQSS…TSTG and NVPSTSQPQQG. Positions 367 to 377 are enriched in basic and acidic residues; sequence DNEKRLIEKKL. Residues 407-419 show a composition bias toward low complexity; it reads LSSNLTTTNNNNN. The span at 439-462 shows a compositional bias: polar residues; that stretch reads FSTQAGSGNATTVDDPASTTTSKE. The Protein kinase domain maps to 551–863; sequence FTIYDTLGEG…LPEALQHRYF (313 aa). ATP contacts are provided by residues 557–565 and lysine 580; that span reads LGEGTFGKV. Aspartate 677 (proton acceptor) is an active-site residue.

Belongs to the protein kinase superfamily. CMGC Ser/Thr protein kinase family. Lammer subfamily. As to expression, expressed in body wall, vulval and anal depressor muscles.

Its subcellular location is the cytoplasm. The protein localises to the nucleus. Functionally, probable dual specificity kinase acting on both serine/threonine and tyrosine-containing substrates. Negatively regulates p38 MAPK signaling to allow for the plasma membrane of body wall muscle cells to form projections, also called muscle arms, that extend and connect the body wall muscles to target motor neurons. Negative regulation of p38 MAPK signaling may in turn modulate the trafficking of the muscle specific receptor eva-1 to the lysosome, to ensure proper display of the eva-1 receptor on the plasma membrane of muscle cells and allow for muscle arm extension towards guidance cues. This Caenorhabditis elegans protein is Probable dual specificity protein kinase madd-3.